We begin with the raw amino-acid sequence, 193 residues long: Acyl carrier protein phosphodiesterase (193 aa).

The protein belongs to the AcpH family.

It catalyses the reaction holo-[ACP] + H2O = apo-[ACP] + (R)-4'-phosphopantetheine + H(+). Functionally, converts holo-ACP to apo-ACP by hydrolytic cleavage of the phosphopantetheine prosthetic group from ACP. The sequence is that of Acyl carrier protein phosphodiesterase from Yersinia pestis.